The primary structure comprises 91 residues: Small ribosomal subunit protein uS15 (91 aa).

The protein belongs to the universal ribosomal protein uS15 family. Part of the 30S ribosomal subunit. Forms a bridge to the 50S subunit in the 70S ribosome, contacting the 23S rRNA.

One of the primary rRNA binding proteins, it binds directly to 16S rRNA where it helps nucleate assembly of the platform of the 30S subunit by binding and bridging several RNA helices of the 16S rRNA. Its function is as follows. Forms an intersubunit bridge (bridge B4) with the 23S rRNA of the 50S subunit in the ribosome. This is Small ribosomal subunit protein uS15 from Rickettsia prowazekii (strain Madrid E).